The primary structure comprises 918 residues: Nitrate reductase [NADH] (918 aa).

The tract at residues 25-44 (KNGPNHRADSPVRGCNFPNS) is disordered. Cys-195 lines the Mo-molybdopterin pocket. The region spanning 543-618 (SNTYTLSEVK…LEDYRIGELI (76 aa)) is the Cytochrome b5 heme-binding domain. His-578 and His-601 together coordinate heme. Residues 661–774 (NEKIPCKLIS…KGPLGHIEYT (114 aa)) form the FAD-binding FR-type domain. FAD contacts are provided by residues 714–717 (RAYT), 731–735 (VVKVY), Phe-736, Phe-743, 748–750 (IMS), and Thr-801.

Belongs to the nitrate reductase family. Homodimer. FAD is required as a cofactor. The cofactor is heme. Mo-molybdopterin serves as cofactor.

It catalyses the reaction nitrite + NAD(+) + H2O = nitrate + NADH + H(+). Its function is as follows. Nitrate reductase is a key enzyme involved in the first step of nitrate assimilation in plants, fungi and bacteria. The sequence is that of Nitrate reductase [NADH] from Cucurbita maxima (Pumpkin).